The following is a 355-amino-acid chain: tRNA-specific 2-thiouridylase MnmA (355 aa).

Residues 7–14 (GLSGGVDS) and Leu-33 contribute to the ATP site. Residue Cys-94 is the Nucleophile of the active site. Cys-94 and Cys-193 are disulfide-bonded. Gly-119 is a binding site for ATP. Residues 143–145 (KDQ) are interaction with tRNA. Cys-193 acts as the Cysteine persulfide intermediate in catalysis. Residues 298–299 (RY) form an interaction with tRNA region.

This sequence belongs to the MnmA/TRMU family.

It localises to the cytoplasm. It carries out the reaction S-sulfanyl-L-cysteinyl-[protein] + uridine(34) in tRNA + AH2 + ATP = 2-thiouridine(34) in tRNA + L-cysteinyl-[protein] + A + AMP + diphosphate + H(+). Its function is as follows. Catalyzes the 2-thiolation of uridine at the wobble position (U34) of tRNA, leading to the formation of s(2)U34. The chain is tRNA-specific 2-thiouridylase MnmA from Acaryochloris marina (strain MBIC 11017).